Here is a 574-residue protein sequence, read N- to C-terminus: Lipase maturation factor 1 (574 aa).

Residues 1–39 (MRPDSLVMAAPEGSLRKRKVGGAEHSPASQPSLARDPAD) form a disordered region. Residues 1–49 (MRPDSLVMAAPEGSLRKRKVGGAEHSPASQPSLARDPADSPARLHTGTF) are Cytoplasmic-facing. Residues 50–72 (WLTRIVLLRALAFIYFVAFLVAF) form a helical membrane-spanning segment. The Lumenal portion of the chain corresponds to 73-127 (NQNKALIGDRGLLPCKLYLKNVQEYFQGSTGWAAWTYAPTIMWLLDWSDMNFNLD). The chain crosses the membrane as a helical span at residues 128-151 (LIALLGLGISSFVLVTGCANMILM). Residues 152–207 (TALWALYMSLVNVGQIWYSFGWESQLLETGFLGIFLSPLWTLSRLPKNTPTSQIVL) lie on the Cytoplasmic side of the membrane. A helical membrane pass occupies residues 208–221 (WGFRWLIFRIMLGA). Residues 222 to 292 (GLIKVRGDKC…LGRRMRILHG (71 aa)) are Lumenal-facing. A helical transmembrane segment spans residues 293–321 (VLQILFQVILIISGNLSFLNWLTIVPSLA). The Cytoplasmic portion of the chain corresponds to 322–367 (CFDDAALGFLFPSGPQGLKKQVLEIQREDTQRVQPKPRDRGCLVRQ). Residues 368-388 (VVNISLGILVAWLSVPVVINL) traverse the membrane as a helical segment. Over 389–574 (LSSRQIMNTS…LPEPPSRHTR (186 aa)) the chain is Lumenal.

Belongs to the lipase maturation factor family. As to quaternary structure, interacts with LPL and SEL1L. In terms of tissue distribution, expressed in all tissues synthesizing lipoprotein lipase (Lpl) and hepatic lipase (Lipc), including adipose tissue, skeletal muscle, heart, and liver. Expressed at higher levels in tissues that express little or no lipase activity such as testis and pancreas suggesting additional functions in these tissues.

Its subcellular location is the endoplasmic reticulum membrane. Involved in the maturation of specific proteins in the endoplasmic reticulum. Required for maturation and transport of active lipoprotein lipase (LPL) through the secretory pathway. Each LMF1 molecule chaperones 50 or more molecules of LPL. The chain is Lipase maturation factor 1 (Lmf1) from Mus musculus (Mouse).